The sequence spans 206 residues: Flavin prenyltransferase UbiX (206 aa).

Residues 11 to 13 (GAS), Ser37, 103 to 106 (SMST), and Arg138 each bind FMN. Dimethylallyl phosphate contacts are provided by Tyr168 and Arg184.

The protein belongs to the UbiX/PAD1 family.

The catalysed reaction is dimethylallyl phosphate + FMNH2 = prenylated FMNH2 + phosphate. In terms of biological role, flavin prenyltransferase that catalyzes the synthesis of the prenylated FMN cofactor (prenyl-FMN) for 4-hydroxy-3-polyprenylbenzoic acid decarboxylase UbiD. The prenyltransferase is metal-independent and links a dimethylallyl moiety from dimethylallyl monophosphate (DMAP) to the flavin N5 and C6 atoms of FMN. This Synechocystis sp. (strain ATCC 27184 / PCC 6803 / Kazusa) protein is Flavin prenyltransferase UbiX.